Reading from the N-terminus, the 762-residue chain is Pyrophosphate-energized vacuolar membrane proton pump (762 aa).

The Intravacuolar segment spans residues 1–6 (MAILGE). Residues 7–33 (LGTEILIPVCGVIGIVFAVAQWFIVSK) form a helical membrane-spanning segment. The Cytoplasmic segment spans residues 34–81 (VKVTPGAASAAAGAKNGYGDYLIEEEEGLNDHNVVVKCAEIQTAISEG). A helical transmembrane segment spans residues 82 to 111 (ATSFLFTMYQYVGMFMVVFAAIIFLFLGSI). The Intravacuolar portion of the chain corresponds to 112-131 (EGFSTKGQPCTYSKGTCKPA). A disulfide bridge links cysteine 121 with cysteine 128. The helical transmembrane segment at 132 to 159 (LYTALFSTASFLLGAITSLVSGFLGMKI) threads the bilayer. Over 160–182 (ATYANARTTLEARKGVGKAFITA) the chain is Cytoplasmic. A helical membrane pass occupies residues 183 to 212 (FRSGAVMGFLLSSSGLVVLYITINVFKMYY). At 213 to 215 (GDD) the chain is on the intravacuolar side. A helical membrane pass occupies residues 216–244 (WEGLFESITGYGLGGSSMALFGRVGGGIY). Residues 245–282 (TKAADVGADLVGKVERNIPEDDPRNPAVIADNVGDNVG) are Cytoplasmic-facing. Lysine 246 is a substrate binding site. Aspartate 249, aspartate 253, and aspartate 279 together coordinate Mg(2+). The helical transmembrane segment at 283-308 (DIAGMGSDLFGSYAESSCAALVVASI) threads the bilayer. Residues 309–316 (SSFGINHD) lie on the Intravacuolar side of the membrane. Residues 317 to 342 (FTAMCYPLLVSSVGIIVCLLTTLFAT) form a helical membrane-spanning segment. Residues 343–350 (DFFEIKAA) lie on the Cytoplasmic side of the membrane. A helical transmembrane segment spans residues 351 to 378 (NEIEPALKKQLIISTALMTVGVAVISWL). Residues 379–397 (ALPAKFTIFNFGAQKEVSN) lie on the Intravacuolar side of the membrane. A helical transmembrane segment spans residues 398–421 (WGLFFCVAVGLWAGLIIGFVTEYY). Residues 422–443 (TSNAYSPVQDVADSCRTGAATN) lie on the Cytoplasmic side of the membrane. Residues 444-468 (VIFGLALGYKSVIIPIFAIAVSIYV) traverse the membrane as a helical segment. Residues 469 to 474 (SFSIAA) are Intravacuolar-facing. A helical transmembrane segment spans residues 475–501 (MYGIAMAALGMLSTMATGLAIDAYGPI). Residues 502 to 530 (SDNAGGIAEMAGMSHRIRERTDALDAAGN) are Cytoplasmic-facing. 2 residues coordinate Mg(2+): aspartate 503 and asparagine 530. Residues 531–559 (TTAAIGKGFAIGSAALVSLALFGAFVSRA) traverse the membrane as a helical segment. Residues 560–569 (GVKVVDVLSP) lie on the Intravacuolar side of the membrane. The chain crosses the membrane as a helical span at residues 570–598 (KVFIGLIVGAMLPYWFSAMTMKSVGSAAL). Residues 599 to 627 (KMVEEVRRQFNTIPGLMEGTAKPDYATCV) lie on the Cytoplasmic side of the membrane. Residues 628 to 656 (KISTDASIKEMIPPGALVMLTPLIVGTLF) form a helical membrane-spanning segment. Glycine 657 is a topological domain (intravacuolar). The chain crosses the membrane as a helical span at residues 658–685 (VETLSGVLAGALVSGVQIAISASNTGGA). The Cytoplasmic segment spans residues 686-728 (WDNAKKYIEAGNSEHARSLGPKGSDCHKAAVIGDTIGDPLKDT). Mg(2+) contacts are provided by aspartate 687 and aspartate 723. Lysine 726 is a substrate binding site. The chain crosses the membrane as a helical span at residues 729-754 (SGPSLNILIKLMAVESLVFAPFFATY). Residues 755-762 (GGLLFKYI) lie on the Intravacuolar side of the membrane.

The protein belongs to the H(+)-translocating pyrophosphatase (TC 3.A.10) family. K(+)-stimulated subfamily. As to quaternary structure, monomer.

Its subcellular location is the vacuole membrane. It catalyses the reaction diphosphate + H2O + H(+)(in) = 2 phosphate + 2 H(+)(out). Functionally, contributes to the transtonoplast (from cytosol to vacuole lumen) H(+)-electrochemical potential difference. It establishes a proton gradient of similar and often greater magnitude than the H(+)-ATPase on the same membrane. This chain is Pyrophosphate-energized vacuolar membrane proton pump, found in Hordeum vulgare (Barley).